We begin with the raw amino-acid sequence, 616 residues long: Pentatricopeptide repeat-containing protein At4g15720 (616 aa).

PPR repeat units lie at residues 63-93, 94-128, 130-164, 165-199, 200-228, 235-269, 270-300, 301-335, 336-371, and 372-402; these read DTFT…MCEP, NVVS…RPVP, NEYT…GLRR, NIVV…GRNV, VSWT…FNAA, NQFM…GYES, NTVV…IRCH, SVIS…RINP, NYVT…GVVP, and DSRH…IEVG. The type E motif stretch occupies residues 409 to 484; that stretch reads LWGALLSAGR…ERACSWIENK (76 aa). Residues 485–515 form a type E(+) motif region; sequence DSVYVFHAGDLSCDESGEIERFLKDLEKRMK. Residues 522 to 616 form a type DYW motif region; the sequence is SSSMITTSSS…NGSCTCRDYW (95 aa).

This sequence belongs to the PPR family. PCMP-H subfamily.

In Arabidopsis thaliana (Mouse-ear cress), this protein is Pentatricopeptide repeat-containing protein At4g15720 (PCMP-H1).